We begin with the raw amino-acid sequence, 189 residues long: dCTP deaminase (189 aa).

DCTP is bound by residues 112–117, 136–138, glutamine 157, tyrosine 171, and glutamine 181; these read KSTYAR and TLE. Residue glutamate 138 is the Proton donor/acceptor of the active site.

Belongs to the dCTP deaminase family. Homotrimer.

It carries out the reaction dCTP + H2O + H(+) = dUTP + NH4(+). It participates in pyrimidine metabolism; dUMP biosynthesis; dUMP from dCTP (dUTP route): step 1/2. Catalyzes the deamination of dCTP to dUTP. This chain is dCTP deaminase, found in Acinetobacter baumannii (strain SDF).